Reading from the N-terminus, the 288-residue chain is Syntaxin-1B (288 aa).

The segment covering 1 to 13 (MKDRTQELRSAKD) has biased composition (basic and acidic residues). The disordered stretch occupies residues 1-20 (MKDRTQELRSAKDSDDEEEV). Residues 1 to 264 (MKDRTQELRS…KYQSKARRKK (264 aa)) are Cytoplasmic-facing. Residues S10 and S14 each carry the phosphoserine modification. Residues 29-104 (MDEFFEQVEE…IEQSIEQEEG (76 aa)) adopt a coiled-coil conformation. Residues 191–253 (LNEIETRHNE…ERAVSDTKKA (63 aa)) enclose the t-SNARE coiled-coil homology domain. A helical; Anchor for type IV membrane protein transmembrane segment spans residues 265-288 (IMIIICCVVLGVVLASSIGGTLGL).

It belongs to the syntaxin family. In terms of assembly, interacts with OTOF. Interacts with SYT6 and SYT8; the interaction is Ca(2+)-dependent. Post-translationally, phosphorylated by CK2.

The protein localises to the membrane. It is found in the nucleus. Its subcellular location is the cytoplasm. The protein resides in the cytoskeleton. It localises to the microtubule organizing center. The protein localises to the centrosome. It is found in the spindle. Potentially involved in docking of synaptic vesicles at presynaptic active zones. May mediate Ca(2+)-regulation of exocytosis acrosomal reaction in sperm. The protein is Syntaxin-1B (STX1B) of Homo sapiens (Human).